Reading from the N-terminus, the 417-residue chain is Diphosphomevalonate decarboxylase 1 (417 aa).

Position 22-25 (22-25) interacts with (R)-5-diphosphomevalonate; sequence YWGK. Positions 39-47 match the Peroxisomal targeting signal PTS2 motif; the sequence is RVSLDPDHL. Residues Arg-77, 160–165, and Thr-216 each bind (R)-5-diphosphomevalonate; that span reads SGSACR.

This sequence belongs to the diphosphomevalonate decarboxylase family. Homodimer.

The protein localises to the peroxisome. The catalysed reaction is (R)-5-diphosphomevalonate + ATP = isopentenyl diphosphate + ADP + phosphate + CO2. It participates in isoprenoid biosynthesis; isopentenyl diphosphate biosynthesis via mevalonate pathway; isopentenyl diphosphate from (R)-mevalonate: step 3/3. In terms of biological role, performs the first committed step in the biosynthesis of isoprene-containing compounds such as sterols and terpenoids. Component of the triterpene saponins (e.g. ginsenosides or panaxosides) and phytosterols biosynthetic pathways. Catalyzes the conversion of mevalonate diphosphate to isopentenyl diphosphate (IPP). The protein is Diphosphomevalonate decarboxylase 1 of Panax ginseng (Korean ginseng).